The primary structure comprises 165 residues: MTTMTNSLISNSVSSVPESLFSSASIHRPVAINPAMLAQFSINLPVLPFESSASLGTSTTSSSRCSSTESSAAPGKIRRGRPQQEIADGQDAHSQKKRHRRLYARQYRAQMRQKVENVKSLHDEKEQLELEVKALRQAVSGLQQENAQKDFLISILQLNNQINHS.

The span at 53-71 shows a compositional bias: low complexity; the sequence is ASLGTSTTSSSRCSSTESS. Residues 53–99 form a disordered region; the sequence is ASLGTSTTSSSRCSSTESSAAPGKIRRGRPQQEIADGQDAHSQKKRH. The stretch at 104-150 forms a coiled coil; sequence ARQYRAQMRQKVENVKSLHDEKEQLELEVKALRQAVSGLQQENAQKD.

The protein localises to the nucleus. Its function is as follows. Transcription factor that regulates the expression of genes in response to changes in temperature. In particular, binds to the promoter region of genes such as asp-17 in response to severe cold to warm temperature transitions to promote gene expression. Promotes stress-induced death, particularly in older animals, following cold shock followed by warming and this may have evolved as a form of kin survival under thermal stress conditions, favoring the survival of younger animals. The polypeptide is Transcription factor zip-10 (Caenorhabditis elegans).